Reading from the N-terminus, the 385-residue chain is S-adenosylmethionine synthase (385 aa).

An ATP-binding site is contributed by histidine 16. Aspartate 18 is a binding site for Mg(2+). Position 44 (glutamate 44) interacts with K(+). Glutamate 57 and glutamine 100 together coordinate L-methionine. The segment at 100–110 is flexible loop; the sequence is QSPDINQGVDK. ATP contacts are provided by residues 165–167, 231–232, aspartate 240, 246–247, alanine 263, and lysine 267; these read DAK, RF, and RK. Aspartate 240 serves as a coordination point for L-methionine. Lysine 271 lines the L-methionine pocket.

Belongs to the AdoMet synthase family. In terms of assembly, homotetramer; dimer of dimers. Mg(2+) is required as a cofactor. The cofactor is K(+).

Its subcellular location is the cytoplasm. It catalyses the reaction L-methionine + ATP + H2O = S-adenosyl-L-methionine + phosphate + diphosphate. Its pathway is amino-acid biosynthesis; S-adenosyl-L-methionine biosynthesis; S-adenosyl-L-methionine from L-methionine: step 1/1. In terms of biological role, catalyzes the formation of S-adenosylmethionine (AdoMet) from methionine and ATP. The overall synthetic reaction is composed of two sequential steps, AdoMet formation and the subsequent tripolyphosphate hydrolysis which occurs prior to release of AdoMet from the enzyme. The polypeptide is S-adenosylmethionine synthase (Vibrio cholerae serotype O1 (strain ATCC 39315 / El Tor Inaba N16961)).